A 159-amino-acid chain; its full sequence is Urease subunit beta 2 (159 aa).

Positions 1-24 (MAKEPTKAAHPQPEQTKTNHKAHR) are disordered.

It belongs to the urease beta subunit family. In terms of assembly, heterotrimer of UreA (gamma), UreB (beta) and UreC (alpha) subunits. Three heterotrimers associate to form the active enzyme.

It is found in the cytoplasm. It carries out the reaction urea + 2 H2O + H(+) = hydrogencarbonate + 2 NH4(+). It functions in the pathway nitrogen metabolism; urea degradation; CO(2) and NH(3) from urea (urease route): step 1/1. Disrupting the ure2 operon has no effect on urease activity, or pathogen survival in BALB/c mice when inoculated by gavage, but confers slightly enhanced resistance to low pH killing in vitro. The protein is Urease subunit beta 2 of Brucella suis biovar 1 (strain 1330).